The sequence spans 301 residues: Acetylglutamate kinase (301 aa).

Residues 72-73, Arg-94, and Asn-199 contribute to the substrate site; that span reads GG.

The protein belongs to the acetylglutamate kinase family. ArgB subfamily.

It is found in the cytoplasm. It carries out the reaction N-acetyl-L-glutamate + ATP = N-acetyl-L-glutamyl 5-phosphate + ADP. The protein operates within amino-acid biosynthesis; L-arginine biosynthesis; N(2)-acetyl-L-ornithine from L-glutamate: step 2/4. Its function is as follows. Catalyzes the ATP-dependent phosphorylation of N-acetyl-L-glutamate. The protein is Acetylglutamate kinase of Bartonella henselae (strain ATCC 49882 / DSM 28221 / CCUG 30454 / Houston 1) (Rochalimaea henselae).